A 166-amino-acid chain; its full sequence is Spiderine-1a (166 aa).

The first 18 residues, 1–18 (MKFALVLLGVCAFYLVNA), serve as a signal peptide directing secretion. Positions 19–58 (TGDLETELEASELQELQEALDLIGETPLESLEAEELEEAR) are excised as a propeptide. The interval 59–99 (KFKWGKLFSTAKKLYKKGKKLSKNKNFKKALKFGKQLAKNL) is linear cationic cytotoxin domain. One can recognise an Oxytoxin-type inhibitor cystine knot (ICK) domain in the interval 113-166 (NNKCWAIGTTCSDDCDCCPEHHCHCPAGKWLPGLFRCTCQVTESDKVNKCPPAE). 5 disulfides stabilise this stretch: Cys-116/Cys-130, Cys-123/Cys-135, Cys-127/Cys-162, Cys-129/Cys-151, and Cys-137/Cys-149.

This sequence belongs to the spiderine family. Cationic/spiderine subfamily. Expressed by the venom gland.

Its subcellular location is the secreted. Functionally, has antimicrobial, insecticidal, cytolytic and cytotoxic activity. Active against E.coli DH5alpha, E.faecalis VKM B 871, B.subtilis VKM B 501, A.globiformis VKM Ac 1112, P.aeruginosa PAO1 and S.aureus 209P in submicromolar or low micromolar ranges. Lyses human erythrocytes. Kills HeLA and A549 cells. The chain is Spiderine-1a from Oxyopes takobius (Lynx spider).